The chain runs to 701 residues: UvrABC system protein B (701 aa).

Residues 35–422 (RRIQGGAADT…GGDVVEQVIR (388 aa)) form the Helicase ATP-binding domain. 48–55 (GATGTGKT) is a binding site for ATP. The short motif at 101 to 124 (YYDYYQPEAYVPQTDTYIEKDSSI) is the Beta-hairpin element. The region spanning 439-605 (QIDDLVHEIR…PLRKKIADIL (167 aa)) is the Helicase C-terminal domain. A disordered region spans residues 620–648 (ARSRGEKRGTPTPRSGALSGPDRVAEQAK). The 36-residue stretch at 656 to 691 (AALVEQLTEQMHQAAADLQFELAARLRDEIKELKRE) folds into the UVR domain.

It belongs to the UvrB family. Forms a heterotetramer with UvrA during the search for lesions. Interacts with UvrC in an incision complex.

It localises to the cytoplasm. Functionally, the UvrABC repair system catalyzes the recognition and processing of DNA lesions. A damage recognition complex composed of 2 UvrA and 2 UvrB subunits scans DNA for abnormalities. Upon binding of the UvrA(2)B(2) complex to a putative damaged site, the DNA wraps around one UvrB monomer. DNA wrap is dependent on ATP binding by UvrB and probably causes local melting of the DNA helix, facilitating insertion of UvrB beta-hairpin between the DNA strands. Then UvrB probes one DNA strand for the presence of a lesion. If a lesion is found the UvrA subunits dissociate and the UvrB-DNA preincision complex is formed. This complex is subsequently bound by UvrC and the second UvrB is released. If no lesion is found, the DNA wraps around the other UvrB subunit that will check the other stand for damage. In Thermobifida fusca (strain YX), this protein is UvrABC system protein B.